The primary structure comprises 236 residues: Orotidine 5'-phosphate decarboxylase (236 aa).

Residues Asp16, Lys38, 65–74 (DLKLHDIGNT), Thr123, Arg184, Gln193, Gly213, and Arg214 each bind substrate. The active-site Proton donor is the Lys67.

This sequence belongs to the OMP decarboxylase family. Type 1 subfamily. As to quaternary structure, homodimer.

The enzyme catalyses orotidine 5'-phosphate + H(+) = UMP + CO2. It functions in the pathway pyrimidine metabolism; UMP biosynthesis via de novo pathway; UMP from orotate: step 2/2. Catalyzes the decarboxylation of orotidine 5'-monophosphate (OMP) to uridine 5'-monophosphate (UMP). In Methylobacterium sp. (strain 4-46), this protein is Orotidine 5'-phosphate decarboxylase.